Here is a 277-residue protein sequence, read N- to C-terminus: Putative serine/threonine-protein kinase PRKY (277 aa).

Residues 1–12 are compositionally biased toward low complexity; sequence MEAPGPAQAAAA. The interval 1-40 is disordered; sequence MEAPGPAQAAAAESNSREVTEDAADWAPALCPSPEARSPE. Residues 49 to 277 form the Protein kinase domain; the sequence is CDALVTMGTG…DFHVKTGRMM (229 aa). ATP-binding positions include 55–63 and lysine 78; that span reads MGTGTFGRV. Catalysis depends on aspartate 172, which acts as the Proton acceptor. Threonine 203 is modified (phosphothreonine).

This sequence belongs to the protein kinase superfamily. AGC Ser/Thr protein kinase family. cAMP subfamily. Ubiquitous.

The enzyme catalyses L-seryl-[protein] + ATP = O-phospho-L-seryl-[protein] + ADP + H(+). It carries out the reaction L-threonyl-[protein] + ATP = O-phospho-L-threonyl-[protein] + ADP + H(+). The sequence is that of Putative serine/threonine-protein kinase PRKY (PRKY) from Homo sapiens (Human).